A 357-amino-acid polypeptide reads, in one-letter code: Histidinol-phosphate aminotransferase 2 (357 aa).

Position 215 is an N6-(pyridoxal phosphate)lysine (lysine 215).

The protein belongs to the class-II pyridoxal-phosphate-dependent aminotransferase family. Histidinol-phosphate aminotransferase subfamily. In terms of assembly, homodimer. The cofactor is pyridoxal 5'-phosphate.

It catalyses the reaction L-histidinol phosphate + 2-oxoglutarate = 3-(imidazol-4-yl)-2-oxopropyl phosphate + L-glutamate. The protein operates within amino-acid biosynthesis; L-histidine biosynthesis; L-histidine from 5-phospho-alpha-D-ribose 1-diphosphate: step 7/9. The sequence is that of Histidinol-phosphate aminotransferase 2 from Thiobacillus denitrificans (strain ATCC 25259 / T1).